A 254-amino-acid polypeptide reads, in one-letter code: tRNA (guanine-N(1)-)-methyltransferase (254 aa).

S-adenosyl-L-methionine is bound by residues glycine 112 and 131–136; that span reads IGDFIL.

The protein belongs to the RNA methyltransferase TrmD family. Homodimer.

The protein localises to the cytoplasm. The catalysed reaction is guanosine(37) in tRNA + S-adenosyl-L-methionine = N(1)-methylguanosine(37) in tRNA + S-adenosyl-L-homocysteine + H(+). In terms of biological role, specifically methylates guanosine-37 in various tRNAs. The protein is tRNA (guanine-N(1)-)-methyltransferase of Persephonella marina (strain DSM 14350 / EX-H1).